Reading from the N-terminus, the 91-residue chain is Small ribosomal subunit protein uS15 (91 aa).

This sequence belongs to the universal ribosomal protein uS15 family. In terms of assembly, part of the 30S ribosomal subunit. Forms a bridge to the 50S subunit in the 70S ribosome, contacting the 23S rRNA.

Functionally, one of the primary rRNA binding proteins, it binds directly to 16S rRNA where it helps nucleate assembly of the platform of the 30S subunit by binding and bridging several RNA helices of the 16S rRNA. In terms of biological role, forms an intersubunit bridge (bridge B4) with the 23S rRNA of the 50S subunit in the ribosome. The polypeptide is Small ribosomal subunit protein uS15 (Rickettsia prowazekii (strain Madrid E)).